A 93-amino-acid polypeptide reads, in one-letter code: Conotoxin F_Vc1 (93 aa).

The N-terminal stretch at 1–22 (MQRGAVLLGVVAFLALWPQAGA) is a signal peptide. A propeptide spanning residues 23 to 33 (EPYNLNDPDVR) is cleaved from the precursor.

It belongs to the conotoxin F superfamily. In terms of processing, contains 4 disulfide bonds. Expressed by the venom duct.

It localises to the secreted. The sequence is that of Conotoxin F_Vc1 from Conus victoriae (Queen Victoria cone).